Reading from the N-terminus, the 144-residue chain is Large ribosomal subunit protein uL16 (144 aa).

The protein belongs to the universal ribosomal protein uL16 family. As to quaternary structure, part of the 50S ribosomal subunit.

Binds 23S rRNA and is also seen to make contacts with the A and possibly P site tRNAs. The chain is Large ribosomal subunit protein uL16 from Levilactobacillus brevis (strain ATCC 367 / BCRC 12310 / CIP 105137 / JCM 1170 / LMG 11437 / NCIMB 947 / NCTC 947) (Lactobacillus brevis).